We begin with the raw amino-acid sequence, 420 residues long: Phosphatidylinositol 5-phosphate 4-kinase type-2 gamma (420 aa).

Ala-2 is modified (N-acetylalanine). Residue Ser-26 is modified to Phosphoserine. In terms of domain architecture, PIPK spans 43–419 (AADPLVGVFL…RFLDFISNIF (377 aa)). Residues 69-75 (VMLLPDD) are required for interaction with PIP5K1A. Ser-349 is modified (phosphoserine).

Interacts with PIP5K1A; the interaction inhibits PIP5K1A kinase activity. Post-translationally, phosphorylated, phosphorylation is induced by EGF. Widely expressed, with the most abundant expression in kidney.

Its subcellular location is the endoplasmic reticulum. The protein resides in the cytoplasm. The enzyme catalyses a 1,2-diacyl-sn-glycero-3-phospho-(1D-myo-inositol-5-phosphate) + ATP = a 1,2-diacyl-sn-glycero-3-phospho-(1D-myo-inositol-4,5-bisphosphate) + ADP + H(+). It carries out the reaction 1,2-dihexadecanoyl-sn-glycero-3-phospho-(1D-myo-inositol-5-phosphate) + ATP = 1,2-dihexadecanoyl-sn-glycero-3-phospho-(1D-myo-inositol-4,5-bisphosphate) + ADP + H(+). It catalyses the reaction 1,2-dihexadecanoyl-sn-glycero-3-phospho-(1D-myo-inositol-5-phosphate) + GTP = 1,2-dihexadecanoyl-sn-glycero-3-phospho-(1D-myo-inositol-4,5-bisphosphate) + GDP + H(+). In terms of biological role, phosphatidylinositol 5-phosphate 4-kinase with low enzymatic activity. May be a GTP sensor, has higher GTP-dependent kinase activity than ATP-dependent kinase activity. PIP4Ks negatively regulate insulin signaling through a catalytic-independent mechanism. They interact with PIP5Ks and suppress PIP5K-mediated PtdIns(4,5)P2 synthesis and insulin-dependent conversion to PtdIns(3,4,5)P3. The polypeptide is Phosphatidylinositol 5-phosphate 4-kinase type-2 gamma (Rattus norvegicus (Rat)).